Reading from the N-terminus, the 196-residue chain is uncharacterized protein (196 aa).

This sequence to H.influenzae HI_0431.

This is an uncharacterized protein from Salmonella typhi.